The sequence spans 264 residues: Undecaprenyl-diphosphatase (264 aa).

7 helical membrane passes run 38–58 (RSDF…VLVF), 75–95 (REYV…GLVV), 106–126 (VSPV…VEAY), 136–156 (VTWT…VFPG), 181–201 (FVFL…FLEM), 217–237 (VAFL…MGYI), and 242–262 (FTAF…WLPS).

This sequence belongs to the UppP family.

The protein resides in the cell membrane. The catalysed reaction is di-trans,octa-cis-undecaprenyl diphosphate + H2O = di-trans,octa-cis-undecaprenyl phosphate + phosphate + H(+). In terms of biological role, catalyzes the dephosphorylation of undecaprenyl diphosphate (UPP). Confers resistance to bacitracin. The polypeptide is Undecaprenyl-diphosphatase (Stenotrophomonas maltophilia (strain K279a)).